We begin with the raw amino-acid sequence, 100 residues long: Small ribosomal subunit protein uS14c (100 aa).

The protein belongs to the universal ribosomal protein uS14 family. In terms of assembly, part of the 30S ribosomal subunit.

It is found in the plastid. Functionally, binds 16S rRNA, required for the assembly of 30S particles. This Cuscuta obtusiflora (Peruvian dodder) protein is Small ribosomal subunit protein uS14c.